Consider the following 132-residue polypeptide: Transcription antitermination protein NusB (132 aa).

This sequence belongs to the NusB family.

Its function is as follows. Involved in transcription antitermination. Required for transcription of ribosomal RNA (rRNA) genes. Binds specifically to the boxA antiterminator sequence of the ribosomal RNA (rrn) operons. This is Transcription antitermination protein NusB from Campylobacter jejuni subsp. jejuni serotype O:6 (strain 81116 / NCTC 11828).